We begin with the raw amino-acid sequence, 175 residues long: Protein-export protein SecB (175 aa).

Residues Gln-154–Gln-175 are disordered.

This sequence belongs to the SecB family. In terms of assembly, homotetramer, a dimer of dimers. One homotetramer interacts with 1 SecA dimer.

Its subcellular location is the cytoplasm. One of the proteins required for the normal export of preproteins out of the cell cytoplasm. It is a molecular chaperone that binds to a subset of precursor proteins, maintaining them in a translocation-competent state. It also specifically binds to its receptor SecA. The polypeptide is Protein-export protein SecB (Bordetella petrii (strain ATCC BAA-461 / DSM 12804 / CCUG 43448)).